The sequence spans 546 residues: Peptidoglycan transport ATP-binding protein YejF (546 aa).

2 ABC transporter domains span residues 12–261 (VRDL…RHLL) and 291–530 (IKAG…KALL). Residues 46–53 (GESGSGKS) and 323–330 (GESGSGKT) contribute to the ATP site.

Belongs to the ABC transporter superfamily. The complex is composed of one ATP-binding protein (YejF), two transmembrane proteins (YejB and YejE) and a solute-binding protein (YepA or YejA).

Its subcellular location is the cell inner membrane. Its function is as follows. Part of the ABC transporter complex YejBEF-YepA involved in the uptake of muropeptides, the breakdown products of cell wall peptidoglycan. The import of muropeptides into the cell enables peptidoglycan recycling, which is vital for cell wall integrity in this bacterium. Is also probably part of the ABC transporter complex YejABEF, which is likely involved in broad-spectrum peptide import. Responsible for energy coupling to the transport system. The chain is Peptidoglycan transport ATP-binding protein YejF from Agrobacterium fabrum (strain C58 / ATCC 33970) (Agrobacterium tumefaciens (strain C58)).